The following is a 530-amino-acid chain: 2,3-bisphosphoglycerate-independent phosphoglycerate mutase (530 aa).

Positions 15 and 65 each coordinate Mn(2+). Residue Ser-65 is the Phosphoserine intermediate of the active site. Residues His-126, 155–156 (RD), Arg-187, Arg-193, 257–260 (RPDR), and Lys-330 each bind substrate. Mn(2+)-binding residues include Asp-397, His-401, Asp-438, His-439, and His-456.

It belongs to the BPG-independent phosphoglycerate mutase family. As to quaternary structure, monomer. Requires Mn(2+) as cofactor.

It carries out the reaction (2R)-2-phosphoglycerate = (2R)-3-phosphoglycerate. Its pathway is carbohydrate degradation; glycolysis; pyruvate from D-glyceraldehyde 3-phosphate: step 3/5. In terms of biological role, catalyzes the interconversion of 2-phosphoglycerate and 3-phosphoglycerate. The sequence is that of 2,3-bisphosphoglycerate-independent phosphoglycerate mutase from Synechococcus sp. (strain JA-3-3Ab) (Cyanobacteria bacterium Yellowstone A-Prime).